The chain runs to 196 residues: Heat shock protein beta-8 (196 aa).

2 positions are modified to phosphoserine: Ser-24 and Ser-57. Thr-63 carries the phosphothreonine; by PKC; in vitro modification. 2 positions are modified to asymmetric dimethylarginine: Arg-71 and Arg-78. The 112-residue stretch at 74–185 (TATARFGVPA…TFGESSFNNE (112 aa)) folds into the sHSP domain. Residues 176–196 (TFGESSFNNELPQDSQEVTCT) are disordered. The segment covering 177–196 (FGESSFNNELPQDSQEVTCT) has biased composition (polar residues).

The protein belongs to the small heat shock protein (HSP20) family. Monomer. Forms a ternary complex with BAG3 and HSPA1A. Component of the chaperone-assisted selective autophagy (CASA) complex consisting of BAG3, HSPA8/HSC70, HSPB8 and STUB1/CHIP. Interacts with HSPB1. Interacts with DNAJB6. Interacts with BAG3. In terms of tissue distribution, predominantly expressed in skeletal muscle and heart.

It localises to the cytoplasm. It is found in the nucleus. In terms of biological role, involved in the chaperone-assisted selective autophagy (CASA), a crucial process for protein quality control, particularly in mechanical strained cells and tissues such as muscle. Displays temperature-dependent chaperone activity. This Homo sapiens (Human) protein is Heat shock protein beta-8 (HSPB8).